The primary structure comprises 862 residues: Eukaryotic translation initiation factor 3 subunit C (862 aa).

The segment at 1–81 is disordered; it reads MSSRFFYGGG…EEEEKVTVVK (81 aa). A compositionally biased stretch (acidic residues) spans 17–54; the sequence is SSDEEELYSDREEEEKSEEEESSEEEDETSEEEESDEE. Basic and acidic residues predominate over residues 55 to 65; sequence TGAKKFLKDVA. The span at 66–75 shows a compositional bias: acidic residues; it reads SDSEEEEEEE. The PCI domain occupies 600 to 774; the sequence is FHMHINLELL…NAIVFRKGVE (175 aa). A disordered region spans residues 813 to 862; the sequence is RDQGAGARGGRGSGRGGQARGGPRFPGGQQGRRPGGQQFGGGALGGAIKA. Over residues 818–862 the composition is skewed to gly residues; sequence GARGGRGSGRGGQARGGPRFPGGQQGRRPGGQQFGGGALGGAIKA.

Belongs to the eIF-3 subunit C family. As to quaternary structure, component of the eukaryotic translation initiation factor 3 (eIF-3) complex.

It is found in the cytoplasm. Functionally, component of the eukaryotic translation initiation factor 3 (eIF-3) complex, which is involved in protein synthesis of a specialized repertoire of mRNAs and, together with other initiation factors, stimulates binding of mRNA and methionyl-tRNAi to the 40S ribosome. The eIF-3 complex specifically targets and initiates translation of a subset of mRNAs involved in cell proliferation. This Neosartorya fischeri (strain ATCC 1020 / DSM 3700 / CBS 544.65 / FGSC A1164 / JCM 1740 / NRRL 181 / WB 181) (Aspergillus fischerianus) protein is Eukaryotic translation initiation factor 3 subunit C (nip1).